The following is a 227-amino-acid chain: GTP:AMP phosphotransferase AK3, mitochondrial (227 aa).

The GTP site is built by G17, G19, K20, G21, and T22. The residue at position 20 (K20) is an N6-succinyllysine. K29 carries the N6-acetyllysine; alternate modification. K29 is modified (N6-succinyllysine; alternate). Position 34 is an N6-acetyllysine (K34). The residue at position 37 (S37) is a Phosphoserine. The NMP stretch occupies residues 37–66; that stretch reads SSGDLLRQNMLQGTEIAVLAKSFIDQGKLI. S38 and R43 together coordinate AMP. N6-succinyllysine is present on K57. K64 and K80 each carry N6-acetyllysine; alternate. N6-succinyllysine; alternate occurs at positions 64 and 80. K64 is an AMP binding site. Positions 91, 94, and 98 each coordinate AMP. The interval 127 to 164 is LID; that stretch reads ARWIHPASGRVYNIEFNPPKTVGIDDLTGEPLIQREDD. R128, Y138, N139, R161, and R172 together coordinate GTP. 2 positions are modified to N6-acetyllysine; alternate: K174 and K189. 2 positions are modified to N6-succinyllysine; alternate: K174 and K189. A GTP-binding site is contributed by T201. K203 bears the N6-acetyllysine mark.

This sequence belongs to the adenylate kinase family. AK3 subfamily. In terms of assembly, monomer.

The protein resides in the mitochondrion matrix. It carries out the reaction a ribonucleoside 5'-triphosphate + AMP = a ribonucleoside 5'-diphosphate + ADP. The enzyme catalyses GTP + AMP = GDP + ADP. The catalysed reaction is ITP + AMP = IDP + ADP. Mitochondrial adenylate kinase with a specific GTP:AMP phosphotransferase activity. Could also use ITP as phosphate donor. Its physiological function is to recycle GTP into GDP which is necessary for the TCA cycle in the mitochondrial matrix. The chain is GTP:AMP phosphotransferase AK3, mitochondrial from Rattus norvegicus (Rat).